A 525-amino-acid polypeptide reads, in one-letter code: MQIRHFNRLKRSVLLFASVLLLSACQIESQPKSEFEKIQERGVLRVGTLNNQLSYYIGPDGPAGLDYELARKFAEELGVKLEIKPAFRQADLFPALKKGDIDIIATGLNQTSQAVKRFRPGPAYYYVSQQVVYKKGQLRPRDIEQLIEYQASKDSQSEEDVNAGAQTLKIVEQSQYVPTLTALKKQYPELQFEIVGDADTRDLLKHVSTGELRFTVTDSVELSLAQRLYPDLALAFELTEDQPVSWFTRRSEDESLYAMLIEFFGNIKQSGELASLEEKYIGHIEAFDYVDTRAFIRALDDKLPRWAPLFQKYSEEFDWRLIAALAYQESHWKPKAKSPTGVRGMMMLTLPTAKSVGVTDRLNPEQSVRGGVEYLRRIVARVPDTINEHEKIWFALASYNIGYGHMMDARRLTKAQGGDPNAWADVKDRLPLLRQKRYYSQTRYGYARGDEARNYVENIRRYYQSIIGHVSQKPSIDEDTDDLQVIPPLNPELLISGAVETIAEEVSGASDITNEVDEDLDQEEE.

The first 24 residues, 1–24 (MQIRHFNRLKRSVLLFASVLLLSA), serve as a signal peptide directing secretion. Residues 25–284 (CQIESQPKSE…SLEEKYIGHI (260 aa)) form a non-LT domain region. The segment at 286-525 (AFDYVDTRAF…VDEDLDQEEE (240 aa)) is LT domain. The active site involves Glu329. The interval 506-525 (VSGASDITNEVDEDLDQEEE) is disordered. Acidic residues predominate over residues 514–525 (NEVDEDLDQEEE).

It in the N-terminal section; belongs to the bacterial solute-binding protein 3 family. In the C-terminal section; belongs to the transglycosylase Slt family.

It localises to the cell outer membrane. The catalysed reaction is Exolytic cleavage of the (1-&gt;4)-beta-glycosidic linkage between N-acetylmuramic acid (MurNAc) and N-acetylglucosamine (GlcNAc) residues in peptidoglycan, from either the reducing or the non-reducing ends of the peptidoglycan chains, with concomitant formation of a 1,6-anhydrobond in the MurNAc residue.. Functionally, murein-degrading enzyme that degrades murein glycan strands and insoluble, high-molecular weight murein sacculi, with the concomitant formation of a 1,6-anhydromuramoyl product. Lytic transglycosylases (LTs) play an integral role in the metabolism of the peptidoglycan (PG) sacculus. Their lytic action creates space within the PG sacculus to allow for its expansion as well as for the insertion of various structures such as secretion systems and flagella. This Vibrio parahaemolyticus serotype O3:K6 (strain RIMD 2210633) protein is Membrane-bound lytic murein transglycosylase F.